We begin with the raw amino-acid sequence, 279 residues long: Urease accessory protein UreD (279 aa).

The protein belongs to the UreD family. UreD, UreF and UreG form a complex that acts as a GTP-hydrolysis-dependent molecular chaperone, activating the urease apoprotein by helping to assemble the nickel containing metallocenter of UreC. The UreE protein probably delivers the nickel.

The protein localises to the cytoplasm. Required for maturation of urease via the functional incorporation of the urease nickel metallocenter. This chain is Urease accessory protein UreD, found in Rhodopseudomonas palustris (strain HaA2).